Consider the following 796-residue polypeptide: Vacuolar protein sorting-associated protein 35 (796 aa).

The residue at position 7 (S7) is a Phosphoserine. 2 interaction with SNX3 regions span residues 25-44 and 205-215; these read VQSF…DALK and DREKRERERQE. The segment at 438–796 is interaction with SLC11A2; sequence CYVLSNVLDY…EGPIYEGLIL (359 aa). The interval 500-693 is interaction with IGF2R cytoplasmic domain; sequence SDDPDQQYLI…DKNGEELHGG (194 aa). The tract at residues 776–796 is disordered; sequence HLRSRRESPESEGPIYEGLIL. The residue at position 783 (S783) is a Phosphoserine. Y791 bears the Phosphotyrosine mark.

The protein belongs to the VPS35 family. As to quaternary structure, component of the heterotrimeric retromer cargo-selective complex (CSC), also described as vacuolar protein sorting subcomplex (VPS) formed by VPS26 (VPS26A or VPS26B), VPS29 and VPS35. The CSC has a highly elongated structure with VPS26 and VPS29 binding independently at opposite distal ends of VPS35 as central platform. The CSC is believed to associate with variable sorting nexins to form functionally distinct retromer complex variants. The originally described retromer complex (also called SNX-BAR retromer) is a pentamer containing the CSC and a heterodimeric membrane-deforming subcomplex formed between SNX1 or SNX2 and SNX5 or SNX6 (also called SNX-BAR subcomplex); the affinity between the respective CSC and SNX-BAR subcomplexes is low. The CSC associates with SNX3 to form a SNX3-retromer complex. The CSC associates with SNX27, the WASH complex and the SNX-BAR subcomplex to form the SNX27-retromer complex. Interacts with VPS26A, VPS29, VPS26B and LRRK2. Interacts with SNX1, SNX2, IGF2R, SNX3, GOLPH3, SLC11A2, WASHC2, FKBP15, WASHC1, EHD1. Interacts with MAGEL2; leading to recruitment of the TRIM27:MAGEL2 E3 ubiquitin ligase complex retromer-containing endosomes. Interacts with SORCS2. Detected in striatum (at protein level). Ubiquitous. Highly expressed in fat tissue, testis, brain, kidney, thymus, liver and pancreas, and at lower levels in heart, intestine and skeletal muscle. Detected in oocytes, pre-implantation embryos and at 6.5-12.5 dpc.

The protein resides in the cytoplasm. It localises to the membrane. It is found in the endosome. The protein localises to the early endosome. Its subcellular location is the late endosome. Acts as a component of the retromer cargo-selective complex (CSC). The CSC is believed to be the core functional component of retromer or respective retromer complex variants acting to prevent missorting of selected transmembrane cargo proteins into the lysosomal degradation pathway. The recruitment of the CSC to the endosomal membrane involves RAB7A and SNX3. The CSC seems to associate with the cytoplasmic domain of cargo proteins predominantly via VPS35; however, these interactions seem to be of low affinity and retromer SNX proteins may also contribute to cargo selectivity thus questioning the classical function of the CSC. The SNX-BAR retromer mediates retrograde transport of cargo proteins from endosomes to the trans-Golgi network (TGN) and is involved in endosome-to-plasma membrane transport for cargo protein recycling. The SNX3-retromer mediates the retrograde transport of WLS distinct from the SNX-BAR retromer pathway. The SNX27-retromer is believed to be involved in endosome-to-plasma membrane trafficking and recycling of a broad spectrum of cargo proteins. The CSC seems to act as recruitment hub for other proteins, such as the WASH complex and TBC1D5. Required for retrograde transport of lysosomal enzyme receptor IGF2R and SLC11A2. Required to regulate transcytosis of the polymeric immunoglobulin receptor (pIgR-pIgA). Required for endosomal localization of WASHC2 and mediates the association of the CSC with the WASH complex. The protein is Vacuolar protein sorting-associated protein 35 (Vps35) of Mus musculus (Mouse).